The primary structure comprises 534 residues: Chaperonin GroEL, chloroplastic (534 aa).

ATP is bound by residues 29–32 (TLGP), 86–90 (DGTTT), G414, and D496.

Belongs to the chaperonin (HSP60) family. As to quaternary structure, forms a cylinder of 14 subunits composed of two heptameric rings stacked back-to-back. Interacts with the co-chaperonin GroES.

It is found in the plastid. The protein resides in the chloroplast. The enzyme catalyses ATP + H2O + a folded polypeptide = ADP + phosphate + an unfolded polypeptide.. Its function is as follows. Together with its co-chaperonin GroES, plays an essential role in assisting protein folding. The GroEL-GroES system forms a nano-cage that allows encapsulation of the non-native substrate proteins and provides a physical environment optimized to promote and accelerate protein folding. This chain is Chaperonin GroEL, chloroplastic, found in Galdieria sulphuraria (Red alga).